Here is a 527-residue protein sequence, read N- to C-terminus: Glucose-6-phosphate isomerase (527 aa).

Catalysis depends on glutamate 323, which acts as the Proton donor. Catalysis depends on residues histidine 352 and lysine 454.

Belongs to the GPI family.

The protein localises to the cytoplasm. It catalyses the reaction alpha-D-glucose 6-phosphate = beta-D-fructose 6-phosphate. It functions in the pathway carbohydrate biosynthesis; gluconeogenesis. The protein operates within carbohydrate degradation; glycolysis; D-glyceraldehyde 3-phosphate and glycerone phosphate from D-glucose: step 2/4. Its function is as follows. Catalyzes the reversible isomerization of glucose-6-phosphate to fructose-6-phosphate. This chain is Glucose-6-phosphate isomerase, found in Prochlorococcus marinus (strain MIT 9301).